The chain runs to 156 residues: Large ribosomal subunit protein uL15 (156 aa).

The interval 26 to 46 (GIGCGKGKTSGRGHKGQKARS) is disordered. A compositionally biased stretch (basic residues) spans 34–43 (TSGRGHKGQK).

Belongs to the universal ribosomal protein uL15 family. In terms of assembly, part of the 50S ribosomal subunit.

Functionally, binds to the 23S rRNA. The chain is Large ribosomal subunit protein uL15 from Ehrlichia canis (strain Jake).